A 226-amino-acid chain; its full sequence is Probable transaldolase (226 aa).

Lys-91 serves as the catalytic Schiff-base intermediate with substrate.

This sequence belongs to the transaldolase family. Type 3B subfamily.

Its subcellular location is the cytoplasm. The catalysed reaction is D-sedoheptulose 7-phosphate + D-glyceraldehyde 3-phosphate = D-erythrose 4-phosphate + beta-D-fructose 6-phosphate. It participates in carbohydrate degradation; pentose phosphate pathway; D-glyceraldehyde 3-phosphate and beta-D-fructose 6-phosphate from D-ribose 5-phosphate and D-xylulose 5-phosphate (non-oxidative stage): step 2/3. Functionally, transaldolase is important for the balance of metabolites in the pentose-phosphate pathway. The polypeptide is Probable transaldolase (Chlorobium phaeobacteroides (strain DSM 266 / SMG 266 / 2430)).